The chain runs to 571 residues: La-related protein 7 (571 aa).

Methionine 1 carries the N-acetylmethionine modification. The segment covering 1 to 17 has biased composition (basic and acidic residues); the sequence is METENQKTMEESTEKRK. 2 disordered regions span residues 1–25 and 181–366; these read METE…KRSR and LNNP…ERHK. In terms of domain architecture, HTH La-type RNA-binding spans 23 to 117; the sequence is RSRVKQVLAD…KPLGERPKDE (95 aa). In terms of domain architecture, RRM spans 120-198; that stretch reads RTVYVELLPK…PRKPGIFPKT (79 aa). The segment covering 214 to 223 has biased composition (basic residues); sequence KKKKKKKGRI. A Glycyl lysine isopeptide (Lys-Gly) (interchain with G-Cter in SUMO2) cross-link involves residue lysine 232. Threonine 252 bears the Phosphothreonine mark. A phosphoserine mark is found at serine 254 and serine 257. Threonine 261 is modified (phosphothreonine). Basic and acidic residues predominate over residues 287–296; the sequence is KAGKRERSSA. Residues serine 294, serine 295, and serine 335 each carry the phosphoserine modification. Threonine 336 bears the Phosphothreonine mark. Residues 342 to 351 show a composition bias toward basic and acidic residues; the sequence is PGDRKGDSLS. Serine 349 carries the post-translational modification Phosphoserine. Residues 352-365 are compositionally biased toward basic residues; sequence KGKRKHKKKHKERH. Lysine 408 is covalently cross-linked (Glycyl lysine isopeptide (Lys-Gly) (interchain with G-Cter in SUMO2)). A disordered region spans residues 411–432; that stretch reads SEMETESKAPPGSGQQCSTQEK. Polar residues predominate over residues 423–432; it reads SGQQCSTQEK. Positions 439–552 constitute a xRRM domain; that stretch reads QFVTGVIVKI…TEKLITKAEK (114 aa).

The protein belongs to the LARP7 family. Core component of the 7SK RNP complex, at least composed of 7SK RNA, LARP7, MEPCE, HEXIM1 (or HEXIM2) and P-TEFb (composed of CDK9 and CCNT1/cyclin-T1). Interacts with METTL16. Interacts with RBM7; upon genotoxic stress this interaction is enhanced, triggering the release of inactive P-TEFb complex from the core, yielding to P-TEFb complex activation. Associates with box C/D small nucleolar ribonucleoprotein (snoRNP) complexes.

It is found in the nucleus. Its subcellular location is the nucleoplasm. Its function is as follows. RNA-binding protein that specifically binds distinct small nuclear RNA (snRNAs) and regulates their processing and function. Specifically binds the 7SK snRNA (7SK RNA) and acts as a core component of the 7SK ribonucleoprotein (RNP) complex, thereby acting as a negative regulator of transcription elongation by RNA polymerase II. The 7SK RNP complex sequesters the positive transcription elongation factor b (P-TEFb) in a large inactive 7SK RNP complex preventing RNA polymerase II phosphorylation and subsequent transcriptional elongation. The 7SK RNP complex also promotes snRNA gene transcription by RNA polymerase II via interaction with the little elongation complex (LEC). LARP7 specifically binds to the highly conserved 3'-terminal U-rich stretch of 7SK RNA; on stimulation, remains associated with 7SK RNA, whereas P-TEFb is released from the complex. LARP7 also acts as a regulator of mRNA splicing fidelity by promoting U6 snRNA processing. Specifically binds U6 snRNAs and associates with a subset of box C/D RNP complexes: promotes U6 snRNA 2'-O-methylation by facilitating U6 snRNA loading into box C/D RNP complexes. U6 snRNA 2'-O-methylation is required for mRNA splicing fidelity. Binds U6 snRNAs with a 5'-CAGGG-3' sequence motif. U6 snRNA processing is required for spermatogenesis. This chain is La-related protein 7, found in Rattus norvegicus (Rat).